The primary structure comprises 22 residues: Brevinin-2LTa (22 aa).

As to expression, expressed by the skin glands.

It localises to the secreted. In terms of biological role, has antibacterial activity. The sequence is that of Brevinin-2LTa from Rana latastei (Italian agile frog).